A 360-amino-acid chain; its full sequence is DNA replication and repair protein RecF (360 aa).

33–40 is a binding site for ATP; that stretch reads GENGSGKT.

Belongs to the RecF family.

The protein localises to the cytoplasm. Its function is as follows. The RecF protein is involved in DNA metabolism; it is required for DNA replication and normal SOS inducibility. RecF binds preferentially to single-stranded, linear DNA. It also seems to bind ATP. This Rickettsia rickettsii (strain Iowa) protein is DNA replication and repair protein RecF.